The sequence spans 349 residues: Nuclear distribution protein nudE homolog 1-A (349 aa).

Positions 22–189 (VAMKYKQCSE…ELAVQQKQEK (168 aa)) form a coiled coil.

It belongs to the nudE family. In terms of assembly, self-associates. Interacts with pafah1b1. Post-translationally, phosphorylated in mitosis.

It localises to the cytoplasm. Its subcellular location is the cytoskeleton. It is found in the microtubule organizing center. The protein resides in the centrosome. The protein localises to the spindle. It localises to the chromosome. Its subcellular location is the centromere. It is found in the kinetochore. The protein resides in the cleavage furrow. The protein localises to the cytoplasmic vesicle membrane. Functionally, required for centrosome duplication and formation and function of the mitotic spindle. The sequence is that of Nuclear distribution protein nudE homolog 1-A (nde1-a) from Xenopus laevis (African clawed frog).